Consider the following 947-residue polypeptide: DNA topoisomerase 1 (947 aa).

The Toprim domain maps to 16 to 140 (RRLVIVESPT…VKRMVFHEIT (125 aa)). 2 residues coordinate Mg(2+): Glu-22 and Asp-109. The region spanning 155–614 (DIDLVDAQET…FYFGGNHGVS (460 aa)) is the Topo IA-type catalytic domain. The interval 189-194 (SAGRVQ) is interaction with DNA. Tyr-343 serves as the catalytic O-(5'-phospho-DNA)-tyrosine intermediate. Disordered regions lie at residues 733 to 771 (VLPK…GSLL), 846 to 888 (KRAG…GETN), and 910 to 947 (ADRR…QSPR). A compositionally biased stretch (basic residues) spans 915 to 934 (RGPVKRPAKKARKVPAKKAA).

It belongs to the type IA topoisomerase family. As to quaternary structure, monomer. Requires Mg(2+) as cofactor.

The catalysed reaction is ATP-independent breakage of single-stranded DNA, followed by passage and rejoining.. Functionally, releases the supercoiling and torsional tension of DNA, which is introduced during the DNA replication and transcription, by transiently cleaving and rejoining one strand of the DNA duplex. Introduces a single-strand break via transesterification at a target site in duplex DNA. The scissile phosphodiester is attacked by the catalytic tyrosine of the enzyme, resulting in the formation of a DNA-(5'-phosphotyrosyl)-enzyme intermediate and the expulsion of a 3'-OH DNA strand. The free DNA strand then undergoes passage around the unbroken strand, thus removing DNA supercoils. Finally, in the religation step, the DNA 3'-OH attacks the covalent intermediate to expel the active-site tyrosine and restore the DNA phosphodiester backbone. This Mycobacterium leprae (strain TN) protein is DNA topoisomerase 1.